We begin with the raw amino-acid sequence, 278 residues long: Pyrroline-5-carboxylate reductase 2 (278 aa).

The protein belongs to the pyrroline-5-carboxylate reductase family.

It localises to the cytoplasm. It carries out the reaction L-proline + NADP(+) = (S)-1-pyrroline-5-carboxylate + NADPH + 2 H(+). It catalyses the reaction L-proline + NAD(+) = (S)-1-pyrroline-5-carboxylate + NADH + 2 H(+). It participates in amino-acid biosynthesis; L-proline biosynthesis; L-proline from L-glutamate 5-semialdehyde: step 1/1. In terms of biological role, catalyzes the reduction of 1-pyrroline-5-carboxylate (PCA) to L-proline. The polypeptide is Pyrroline-5-carboxylate reductase 2 (proI) (Bacillus subtilis (strain 168)).